The primary structure comprises 297 residues: Band 7 protein AAEL010189 (297 aa).

The segment covering 1–13 has biased composition (polar residues); it reads MGVVESITNSTKP. A disordered region spans residues 1 to 30; that stretch reads MGVVESITNSTKPGVTKKSSPEAEDDSNGE. A helical transmembrane segment spans residues 37–57; sequence ILIFLSWVLVVLTMPFSLLVC.

It belongs to the band 7/mec-2 family.

It is found in the membrane. In Aedes aegypti (Yellowfever mosquito), this protein is Band 7 protein AAEL010189.